Reading from the N-terminus, the 396-residue chain is 1-deoxy-D-xylulose 5-phosphate reductoisomerase (396 aa).

Residues T15, G16, S17, I18, G41, and N129 each coordinate NADPH. K130 is a 1-deoxy-D-xylulose 5-phosphate binding site. E131 contacts NADPH. D155 is a Mn(2+) binding site. Residues S156, E157, S182, and H205 each coordinate 1-deoxy-D-xylulose 5-phosphate. E157 lines the Mn(2+) pocket. G211 serves as a coordination point for NADPH. Positions 218, 223, 224, and 227 each coordinate 1-deoxy-D-xylulose 5-phosphate. E227 contributes to the Mn(2+) binding site.

Belongs to the DXR family. Mg(2+) serves as cofactor. It depends on Mn(2+) as a cofactor.

It carries out the reaction 2-C-methyl-D-erythritol 4-phosphate + NADP(+) = 1-deoxy-D-xylulose 5-phosphate + NADPH + H(+). The protein operates within isoprenoid biosynthesis; isopentenyl diphosphate biosynthesis via DXP pathway; isopentenyl diphosphate from 1-deoxy-D-xylulose 5-phosphate: step 1/6. In terms of biological role, catalyzes the NADPH-dependent rearrangement and reduction of 1-deoxy-D-xylulose-5-phosphate (DXP) to 2-C-methyl-D-erythritol 4-phosphate (MEP). The sequence is that of 1-deoxy-D-xylulose 5-phosphate reductoisomerase from Xanthomonas campestris pv. campestris (strain B100).